We begin with the raw amino-acid sequence, 989 residues long: Protease PrtH (989 aa).

Repeats lie at residues Thr270–Asn323 and Ser528–Asp581. The tract at residues Pro969–Arg989 is disordered.

The protein belongs to the peptidase C25 family.

It is found in the cytoplasmic vesicle. Cleaves human complement component C3. May enable P.gingivalis to evade complement-mediated killing during the immune response. Plays an important role in soft tissue infections and is a virulence factor. The polypeptide is Protease PrtH (prtH) (Porphyromonas gingivalis (strain ATCC BAA-308 / W83)).